The following is a 329-amino-acid chain: Putative glucose ABC transporter permease protein TsgC13 (329 aa).

7 helical membrane-spanning segments follow: residues 3-23 (FAAG…LAGL), 32-52 (GVLN…GFVV), 60-80 (WLGF…HAFL), 89-109 (VISG…FGSG), 139-161 (AFFR…WFFL), 193-213 (LAVI…SLAF), and 216-236 (LWVP…VVFA).

This sequence belongs to the binding-protein-dependent transport system permease family. As to quaternary structure, the complex is composed of two ATP-binding proteins (TsgD13), two transmembrane proteins (TsgB13 and TsgC13) and a solute-binding protein (TsgA13).

It localises to the cell membrane. Functionally, part of an ABC transporter complex involved in glucose import (Potential). Responsible for the translocation of the substrate across the membrane. In Haloferax volcanii (strain ATCC 29605 / DSM 3757 / JCM 8879 / NBRC 14742 / NCIMB 2012 / VKM B-1768 / DS2) (Halobacterium volcanii), this protein is Putative glucose ABC transporter permease protein TsgC13 (tsgC13).